The chain runs to 174 residues: Protein-lysine myristoyltransferase HlyC (174 aa).

Catalysis depends on residues His-23 and Asp-92. His-151 is a heme binding site.

It belongs to the RTX toxin acyltransferase family. In terms of assembly, monomer. Proteolytically cleaved by the protease systems ClpAP, ClpXP and FtsH, leading to its degradation.

It is found in the cytoplasm. It catalyses the reaction tetradecanoyl-[ACP] + L-lysyl-[protein] = N(6)-tetradecanoyl-L-lysyl-[protein] + holo-[ACP] + H(+). The acyltransferase activity is inhibited by heme. Protein-lysine myristoyltransferase that catalyzes myristoylation of the protoxin (HlyA) at two internal lysine residues, thereby converting it to the active toxin. In Escherichia coli, this protein is Protein-lysine myristoyltransferase HlyC.